We begin with the raw amino-acid sequence, 171 residues long: S-ribosylhomocysteine lyase (171 aa).

Residues His-54, His-58, and Cys-128 each coordinate Fe cation.

The protein belongs to the LuxS family. As to quaternary structure, homodimer. Fe cation is required as a cofactor.

The enzyme catalyses S-(5-deoxy-D-ribos-5-yl)-L-homocysteine = (S)-4,5-dihydroxypentane-2,3-dione + L-homocysteine. Its function is as follows. Involved in the synthesis of autoinducer 2 (AI-2) which is secreted by bacteria and is used to communicate both the cell density and the metabolic potential of the environment. The regulation of gene expression in response to changes in cell density is called quorum sensing. Catalyzes the transformation of S-ribosylhomocysteine (RHC) to homocysteine (HC) and 4,5-dihydroxy-2,3-pentadione (DPD). The protein is S-ribosylhomocysteine lyase of Salmonella arizonae (strain ATCC BAA-731 / CDC346-86 / RSK2980).